Reading from the N-terminus, the 407-residue chain is MRQLLPGDTVWRNIRLATMDPQRQAPYGLVDNQALIVREGHICDIVPETQLPVSGDNIHDMQGRLVTPGLIDCHTHLVFAGNRAAEWEQRLNGASYQHISAQGGGINATVSATRACAEETLYLLARERMMRLASEGVTLLEIKSGYGLELATEEKLLRVAAKLAAENAIDISPTLLAAHATPAEYRDDPDGYITLVCETMIPQLWQKGLFDAVDLFCESVGFNVAQSERVLQTAKALGIPVKGHVEQLSLLGGAQLVSRYQGLSADHIEYLDEAGVAAMRDGGTVGVLLPGAFYFLRETQRPPVELLRRYQVPVAVASDFNPGTSPFCSLHLAMNMACVQFGLTSEEAWAGVTRHAARALGRQATHGQLRADYRADFVVWDAEQPVEVVYEPGRNPLYQRVYRGQIS.

Residues His74 and His76 each coordinate Fe(3+). His74 and His76 together coordinate Zn(2+). Residues Arg83, Tyr146, and His179 each coordinate 4-imidazolone-5-propanoate. Tyr146 is an N-formimidoyl-L-glutamate binding site. Fe(3+) is bound at residue His244. Residue His244 coordinates Zn(2+). Gln247 contacts 4-imidazolone-5-propanoate. Residue Asp319 participates in Fe(3+) binding. Asp319 provides a ligand contact to Zn(2+). N-formimidoyl-L-glutamate is bound by residues Asn321 and Gly323. Thr324 provides a ligand contact to 4-imidazolone-5-propanoate.

The protein belongs to the metallo-dependent hydrolases superfamily. HutI family. Zn(2+) serves as cofactor. The cofactor is Fe(3+).

It localises to the cytoplasm. The enzyme catalyses 4-imidazolone-5-propanoate + H2O = N-formimidoyl-L-glutamate. It participates in amino-acid degradation; L-histidine degradation into L-glutamate; N-formimidoyl-L-glutamate from L-histidine: step 3/3. Catalyzes the hydrolytic cleavage of the carbon-nitrogen bond in imidazolone-5-propanoate to yield N-formimidoyl-L-glutamate. It is the third step in the universal histidine degradation pathway. In Salmonella enteritidis PT4 (strain P125109), this protein is Imidazolonepropionase.